We begin with the raw amino-acid sequence, 340 residues long: Fructose-1,6-bisphosphatase class 1 (340 aa).

Residues Glu-107, Asp-126, Leu-128, and Asp-129 each contribute to the Mg(2+) site. Asn-215 serves as a coordination point for substrate. Glu-287 contributes to the Mg(2+) binding site.

The protein belongs to the FBPase class 1 family. In terms of assembly, homotetramer. Mg(2+) serves as cofactor.

It is found in the cytoplasm. The enzyme catalyses beta-D-fructose 1,6-bisphosphate + H2O = beta-D-fructose 6-phosphate + phosphate. Its pathway is carbohydrate biosynthesis; gluconeogenesis. The protein is Fructose-1,6-bisphosphatase class 1 of Brucella ovis (strain ATCC 25840 / 63/290 / NCTC 10512).